We begin with the raw amino-acid sequence, 80 residues long: Defensin-like protein CAL1 (80 aa).

A signal peptide spans 1–31; sequence MAPSRRMVASAFLLLAILVATEMGTTKVAEA. Intrachain disulfides connect cysteine 34–cysteine 80, cysteine 45–cysteine 65, cysteine 51–cysteine 74, and cysteine 55–cysteine 76.

Belongs to the DEFL family. Expressed preferentially in root exodermis and xylem parenchyma cells in vasculature of root and flag leaf sheath.

It localises to the secreted. It is found in the extracellular space. Functionally, plant defensin-like protein involved in accumulation of cadmium (Cd) in rice leaves. Mediates Cd efflux from cytosol into extracellular spaces via chelation. This drives Cd secretion from xylem parenchyma cells into the xylem vessels, hence lowering Cd levels in cytosol meanwhile promoting Cd translocation from roots to shoots. In Oryza sativa subsp. japonica (Rice), this protein is Defensin-like protein CAL1.